The chain runs to 458 residues: (R)-6-hydroxynicotine oxidase (458 aa).

The FAD-binding PCMH-type domain occupies 33-204; that stretch reads RHLQRPSLIA…TEVEVQLYEL (172 aa). FAD contacts are provided by residues 67 to 73, 129 to 130, 134 to 137, Gly-144, Thr-195, Asn-413, and Asn-450; these read RSGGHNP, HP, and FCGL. At His-71 the chain carries Pros-8alpha-FAD histidine.

Belongs to the oxygen-dependent FAD-linked oxidoreductase family. Monomer. It depends on FAD as a cofactor.

It localises to the cytoplasm. It carries out the reaction (R)-6-hydroxynicotine + O2 + H2O = 6-hydroxypseudooxynicotine + H2O2. The catalysed reaction is (R)-6-hydroxynicotine + O2 = 6-hydroxy-N-methylmyosmine + H2O2. Its pathway is alkaloid degradation; nicotine degradation; 6-hydroxypseudooxynicotine from nicotine (R-isomer route): step 2/2. Its activity is regulated as follows. Inhibited by (S)-6-hydroxynicotine. Inhibited by high concentrations of phenanthroline. Functionally, involved in the degradation of D-nicotine. Catalyzes the oxidation of (R)-6-hydroxynicotine (6-hydroxy-D-nicotine) to 6-hydroxypseudooxynicotine. Oxidation of the pyrrolidine ring of (R)-6-hydroxynicotine leads to the formation of the optically inactive 6-hydroxy-N-methylmyosmine, which hydrolyzes spontaneously to 6-hydroxypseudooxynicotine. Acts with absolute stereospecificity on the D-form of 6-hydroxynicotine. Shows lower activity with (R)-6-hydroxynornicotine, and weak activity with (R)-4-(1-methylpyrrolidine-2-yl)phenol, (R)-6-chloronicotine and (R)-nicotine. In Paenarthrobacter nicotinovorans (Arthrobacter nicotinovorans), this protein is (R)-6-hydroxynicotine oxidase.